The following is a 509-amino-acid chain: Probable cytosol aminopeptidase (509 aa).

Mn(2+)-binding residues include Lys277 and Asp282. Residue Lys289 is part of the active site. Mn(2+) contacts are provided by Asp300, Asp359, and Glu361. Arg363 is an active-site residue.

This sequence belongs to the peptidase M17 family. Mn(2+) is required as a cofactor.

Its subcellular location is the cytoplasm. The enzyme catalyses Release of an N-terminal amino acid, Xaa-|-Yaa-, in which Xaa is preferably Leu, but may be other amino acids including Pro although not Arg or Lys, and Yaa may be Pro. Amino acid amides and methyl esters are also readily hydrolyzed, but rates on arylamides are exceedingly low.. It carries out the reaction Release of an N-terminal amino acid, preferentially leucine, but not glutamic or aspartic acids.. Functionally, presumably involved in the processing and regular turnover of intracellular proteins. Catalyzes the removal of unsubstituted N-terminal amino acids from various peptides. The chain is Probable cytosol aminopeptidase from Chloroherpeton thalassium (strain ATCC 35110 / GB-78).